The following is a 401-amino-acid chain: Phosphoglycerate kinase (401 aa).

Substrate is bound by residues D21 to N23, R36, H59 to R62, R116, and R156. ATP is bound by residues E331 and G357 to T360.

It belongs to the phosphoglycerate kinase family.

It is found in the cytoplasm. The enzyme catalyses (2R)-3-phosphoglycerate + ATP = (2R)-3-phospho-glyceroyl phosphate + ADP. It functions in the pathway carbohydrate degradation; glycolysis; pyruvate from D-glyceraldehyde 3-phosphate: step 2/5. The polypeptide is Phosphoglycerate kinase (pgk) (Haloarcula vallismortis (Halobacterium vallismortis)).